Here is a 195-residue protein sequence, read N- to C-terminus: Imidazole glycerol phosphate synthase subunit HisH 2 (195 aa).

A Glutamine amidotransferase type-1 domain is found at 2–195 (KIIIIDTACA…LISNFIKDIG (194 aa)). The active-site Nucleophile is the Cys77. Catalysis depends on residues His175 and Glu177.

Heterodimer of HisH and HisF.

The protein localises to the cytoplasm. It catalyses the reaction 5-[(5-phospho-1-deoxy-D-ribulos-1-ylimino)methylamino]-1-(5-phospho-beta-D-ribosyl)imidazole-4-carboxamide + L-glutamine = D-erythro-1-(imidazol-4-yl)glycerol 3-phosphate + 5-amino-1-(5-phospho-beta-D-ribosyl)imidazole-4-carboxamide + L-glutamate + H(+). The enzyme catalyses L-glutamine + H2O = L-glutamate + NH4(+). The protein operates within amino-acid biosynthesis; L-histidine biosynthesis; L-histidine from 5-phospho-alpha-D-ribose 1-diphosphate: step 5/9. Its function is as follows. IGPS catalyzes the conversion of PRFAR and glutamine to IGP, AICAR and glutamate. The HisH subunit provides the glutamine amidotransferase activity that produces the ammonia necessary to HisF for the synthesis of IGP and AICAR. This Campylobacter jejuni subsp. jejuni serotype O:2 (strain ATCC 700819 / NCTC 11168) protein is Imidazole glycerol phosphate synthase subunit HisH 2 (hisH2).